Consider the following 221-residue polypeptide: Succinate--CoA ligase [ADP-forming] subunit beta, mitochondrial (221 aa).

The ATP-grasp domain occupies 1–122; sequence DVVIKAQVLA…DSNSAYRQKI (122 aa). Lys-5 contacts ATP. An N6-acetyllysine mark is found at Lys-22 and Lys-26. Ser-114 carries the post-translational modification Phosphoserine. A Phosphothreonine modification is found at Thr-139. 171–173 serves as a coordination point for substrate; the sequence is GIM. The residue at position 196 (Lys-196) is an N6-acetyllysine.

This sequence belongs to the succinate/malate CoA ligase beta subunit family. ATP-specific subunit beta subfamily. In terms of assembly, heterodimer of an alpha and a beta subunit. The beta subunit determines specificity for ATP. Interacts with ALAS2.

The protein resides in the mitochondrion. It carries out the reaction succinate + ATP + CoA = succinyl-CoA + ADP + phosphate. It participates in carbohydrate metabolism; tricarboxylic acid cycle; succinate from succinyl-CoA (ligase route): step 1/1. Functionally, ATP-specific succinyl-CoA synthetase functions in the citric acid cycle (TCA), coupling the hydrolysis of succinyl-CoA to the synthesis of ATP and thus represents the only step of substrate-level phosphorylation in the TCA. The beta subunit provides nucleotide specificity of the enzyme and binds the substrate succinate, while the binding sites for coenzyme A and phosphate are found in the alpha subunit. The polypeptide is Succinate--CoA ligase [ADP-forming] subunit beta, mitochondrial (Mesocricetus auratus (Golden hamster)).